We begin with the raw amino-acid sequence, 218 residues long: Glutathione S-transferase Mu 5 (218 aa).

The GST N-terminal domain maps to 2–88; it reads PMTLGYWDIR…YIARKHNLCG (87 aa). Glutathione is bound by residues 7–8, 46–50, 59–60, and 72–73; these read YW, WLNEK, NL, and QS. Residues 90–207 enclose the GST C-terminal domain; it reads TEEEKIRVDI…MKSSQFLRGL (118 aa). Tyr-116 provides a ligand contact to substrate.

It belongs to the GST superfamily. Mu family. In terms of assembly, homodimer.

It localises to the cytoplasm. It catalyses the reaction RX + glutathione = an S-substituted glutathione + a halide anion + H(+). Functionally, conjugation of reduced glutathione to a wide number of exogenous and endogenous hydrophobic electrophiles. This is Glutathione S-transferase Mu 5 (GSTM5) from Homo sapiens (Human).